Consider the following 329-residue polypeptide: MNAPVRVAVTGAAGQIGYSLLFRIASGEMLGQNQPVILQLLDLPQAQNAVKGVMMELEDCAFPLLAGMVATDDPNVAFKDADICLLVGARPRSKGMERADLLEANGAIFTVQGKAIAENAKEDVKVLVVGNPANTNAYIARKAAEKVGRTNPANYTAMLRLDHNRALSQLAAKTGKAVASIENMAVWGNHSPTMYADYRFATVNGESVKSMINDEAWNRDVFLPTVGKRGAAIIEARGLSSAASAANAAIDHIRDWVLGTNGKWVTMGIPSDGSYGIPEGVTYGFPVTCKDGKYEIVQGLEIDEFSRACMNKTLAELEEERQGVAHLLG.

Residue 11 to 17 coordinates NAD(+); it reads GAAGQIG. 2 residues coordinate substrate: R92 and R98. NAD(+)-binding positions include N105, Q112, and 129 to 131; that span reads VGN. Substrate contacts are provided by N131 and R165. H190 (proton acceptor) is an active-site residue.

This sequence belongs to the LDH/MDH superfamily. MDH type 2 family.

It catalyses the reaction (S)-malate + NAD(+) = oxaloacetate + NADH + H(+). Its function is as follows. Catalyzes the reversible oxidation of malate to oxaloacetate. This chain is Malate dehydrogenase, found in Laribacter hongkongensis (strain HLHK9).